A 379-amino-acid polypeptide reads, in one-letter code: Alanine racemase (379 aa).

Catalysis depends on lysine 37, which acts as the Proton acceptor; specific for D-alanine. Residue lysine 37 is modified to N6-(pyridoxal phosphate)lysine. Substrate is bound at residue arginine 137. The active-site Proton acceptor; specific for L-alanine is the tyrosine 269. A substrate-binding site is contributed by methionine 317.

This sequence belongs to the alanine racemase family. Requires pyridoxal 5'-phosphate as cofactor.

The enzyme catalyses L-alanine = D-alanine. The protein operates within amino-acid biosynthesis; D-alanine biosynthesis; D-alanine from L-alanine: step 1/1. Functionally, catalyzes the interconversion of L-alanine and D-alanine. May also act on other amino acids. The polypeptide is Alanine racemase (alr) (Citrifermentans bemidjiense (strain ATCC BAA-1014 / DSM 16622 / JCM 12645 / Bem) (Geobacter bemidjiensis)).